Here is a 139-residue protein sequence, read N- to C-terminus: Protein COLD-REGULATED 15A, chloroplastic (139 aa).

The N-terminal 40 residues, 1 to 40 (MAMSFSGAVLTGMASSFHSGAKQSSFGAVRVGQKTQFVVV), are a transit peptide targeting the chloroplast.

The protein belongs to the COR15 protein family. Forms homooligomers which interact with potential stromal substrates in the stroma of chloroplasts. Interacts with the galactose headgroup of the chloroplast lipid monogalactosyldiacylglycerol (MGDG).

The protein resides in the plastid. Its subcellular location is the chloroplast stroma. Exhibits cryoprotective activity toward stromal substrates (e.g. LDH and rubisco) in chloroplasts and in protoplasts and confers freezing tolerance to plants in a CBF-dependent manner. Protectant against various stresses (e.g. cold, drought and heat stress) by preventing protein aggregation (e.g. LDH) and attenuating enzyme inactivation. Influences the intrinsic curvature of the inner membrane of the chloroplast envelope, and modulates the freeze-induced lamellar-to-hexagonal II phase transitions that occur in regions where the plasma membrane is brought into close apposition with the chloroplast envelope during freeze-induced osmotic contraction. Mediates a shift in the melting curves of phospholipids-containing membranes to lower temperatures. Involved in the regulation of leaf senescence by abscisic acid (ABA) in a VNI2-dependent manner. The polypeptide is Protein COLD-REGULATED 15A, chloroplastic (Arabidopsis thaliana (Mouse-ear cress)).